The following is a 1069-amino-acid chain: MDDKASVGKISVSSDSVSTLNSEDFVLVSRQGDETPSTNNGSDDEKTGLKIVGNGSEQQLQKELADVLMDPPMDDQPGEKELVKRSQLDGEGDGPLSNQLSASSTINPVPLVGLQKPEMSLPVKPGQGDSEASSPFTPVADEDSVVFSKLTYLGCASVNAPRSEVEALRMMSILRSQCQISLDVTLSVPNVSEGIVRLLDPQTNTEIANYPIYKILFCVRGHDGTPESDCFAFTESHYNAELFRIHVFRCEIQEAVSRILYSFATAFRRSAKQTPLSATAAPQTPDSDIFTFSVSLEIKEDDGKGYFSAVPKDKDRQCFKLRQGIDKKIVIYVQQTTNKELAIERCFGLLLSPGKDVRNSDMHLLDLESMGKSSDGKSYVITGSWNPKSPHFQVVNEETPKDKVLFMTTAVDLVITEVQEPVRFLLETKVRVCSPNERLFWPFSKRSTTENFFLKLKQIKQRERKNNTDTLYEVVCLESESERERRKTTASPSVRLPQSGSQSSVIPSPPEDDEEEDNDEPLLSGSGDVSKECAEKILETWGELLSKWHLNLNVRPKQLSSLVRNGVPEALRGEVWQLLAGCHNNDHLVEKYRILITKESPQDSAITRDINRTFPAHDYFKDTGGDGQDSLYKICKAYSVYDEEIGYCQGQSFLAAVLLLHMPEEQAFSVLVKIMFDYGLRELFKQNFEDLHCKFYQLERLMQEYIPDLYNHFLDISLEAHMYASQWFLTLFTAKFPLYMVFHIIDLLLCEGISVIFNVALGLLKTSKDDLLLTDFEGALKFFRVQLPKRYRSEENAKKLMELACNMKISQKKLKKYEKEYHTMREQQAQQEDPIERFERENRRLQEANMRLEQENDDLAHELVTSKIALRKDLDNAEEKADALNKELLMTKQKLIDAEEEKRRLEEESAQLKEMCRRELDKAESEIKKNSSIIGDYKQICSQLSERLEKQQTANKVEIEKIRQKVDDCERCREFFNKEGRVKGISSTKEVLDEDTDEEKETLKNQLREMELELAQTKLQLVEAECKIQDLEHHLGLALNEVQAAKKTWFNRTLSSIKTATGVQGKETC.

The segment at 1–79 (MDDKASVGKI…DPPMDDQPGE (79 aa)) is disordered. Residues 7–22 (VGKISVSSDSVSTLNS) are compositionally biased toward low complexity. Ser-42 carries the phosphoserine modification. One can recognise a PID domain in the interval 142 to 298 (EDSVVFSKLT…IFTFSVSLEI (157 aa)). Ser-360 is modified (phosphoserine). The tract at residues 482–527 (ERERRKTTASPSVRLPQSGSQSSVIPSPPEDDEEEDNDEPLLSGSG) is disordered. Polar residues predominate over residues 489 to 506 (TASPSVRLPQSGSQSSVI). Acidic residues predominate over residues 510 to 520 (PEDDEEEDNDE). The Rab-GAP TBC domain occupies 566 to 752 (GVPEALRGEV…HIIDLLLCEG (187 aa)). Residues 798 to 1047 (KKLMELACNM…ALNEVQAAKK (250 aa)) adopt a coiled-coil conformation. Thr-996 bears the Phosphothreonine mark.

In terms of assembly, interacts with RAB6A and tubulin gamma.

Its subcellular location is the cytoplasm. The protein localises to the cytosol. It localises to the cytoskeleton. The protein resides in the microtubule organizing center. It is found in the centrosome. Functionally, may act as a GTPase-activating protein of RAB6A. May play a role in microtubule nucleation by centrosome. May participate in a RAB6A-mediated pathway involved in the metaphase-anaphase transition. This chain is Rab GTPase-activating protein 1 (RABGAP1), found in Homo sapiens (Human).